A 231-amino-acid chain; its full sequence is Orotidine 5'-phosphate decarboxylase (231 aa).

Substrate is bound by residues Asp-11, Lys-33, 60–69 (DLKFHDIPNT), Thr-120, Arg-181, Gln-190, Gly-210, and Arg-211. Residue Lys-62 is the Proton donor of the active site.

Belongs to the OMP decarboxylase family. Type 1 subfamily. Homodimer.

It carries out the reaction orotidine 5'-phosphate + H(+) = UMP + CO2. It functions in the pathway pyrimidine metabolism; UMP biosynthesis via de novo pathway; UMP from orotate: step 2/2. Functionally, catalyzes the decarboxylation of orotidine 5'-monophosphate (OMP) to uridine 5'-monophosphate (UMP). The protein is Orotidine 5'-phosphate decarboxylase of Shewanella oneidensis (strain ATCC 700550 / JCM 31522 / CIP 106686 / LMG 19005 / NCIMB 14063 / MR-1).